The sequence spans 846 residues: Enhancer of polycomb-like protein 1 (846 aa).

5 disordered regions span residues 169 to 204 (FNSKAEGSSGDVKSDKEQGRGMRVKGKDREKEKGDA), 391 to 466 (TSDE…APDA), 587 to 607 (EKKRPRSIDEVEEEMQEQSPK), 682 to 702 (AADAKPPPAPIFQKPPAPQPN), and 759 to 804 (QVQA…GVKQ). Basic and acidic residues predominate over residues 180 to 203 (VKSDKEQGRGMRVKGKDREKEKGD). The segment covering 411–426 (PSLSGQTPLTSGQSSS) has biased composition (polar residues). Positions 432–452 (TDKDREERAQRERYDAQRNAE) are enriched in basic and acidic residues. Positions 434–490 (KDREERAQRERYDAQRNAERSGILSGRSNAPDALKERLQALQQKTEEMLARKKEQDA) form a coiled coil. Residues 686–702 (KPPPAPIFQKPPAPQPN) show a composition bias toward pro residues. Low complexity predominate over residues 759-773 (QVQAQGQGHPQAHLQ). A compositionally biased stretch (polar residues) spans 783-796 (NGVNSPMPNGQQML).

Belongs to the enhancer of polycomb family. Component of the NuA4 histone acetyltransferase complex.

The protein resides in the nucleus. Component of the NuA4 histone acetyltransferase complex which is involved in transcriptional activation of selected genes principally by acetylation of nucleosomal histone H4 and H2A. The NuA4 complex is also involved in DNA repair. Involved in gene silencing by neighboring heterochromatin, blockage of the silencing spreading along the chromosome, and required for cell cycle progression through G2/M. This Cryptococcus neoformans var. neoformans serotype D (strain JEC21 / ATCC MYA-565) (Filobasidiella neoformans) protein is Enhancer of polycomb-like protein 1 (EPL1).